The following is a 70-amino-acid chain: MMAKQVVVLLALLLLLPIVTASMGDASGRTGRIYMYGTSIQDLFRYLQLDYQRNVFLLRFLLGRGGLLLH.

A signal peptide spans 1–21 (MMAKQVVVLLALLLLLPIVTA). The propeptide occupies 22 to 32 (SMGDASGRTGR).

In terms of tissue distribution, expressed by the venom duct.

It is found in the secreted. Acts as a neurotoxin by inhibiting an ion channel. The sequence is that of Turripeptide OL179 from Iotyrris olangoensis (Sea snail).